The chain runs to 2270 residues: MDVEEQELLGDYRYRNYSSVIEKALRNFESSSEWADLISSLGKLNKALQTNLKYCLLPRRIIISKRLAQCLHPALPSGVHLKALETYEIIFKIIGTKCLAKDLFLYSSGLFPLLSHAAMSVRPILLGLYETYFIPLQRALLPSLQAFITGLLPGLEEGSEIYERTDQLLQRLSVVVGQNVFYGSLWGSVLVSSSIRLPASLFVVSHINKDLSAQSQSYMLGKDQELAIKSLCASVVDSNVLVQRNTLEILLFFFPFNTCLVPDECSMLLHRSDMVRILAGSIQTVLRRDMSLNRRLFAWLLGSDIKGRHMAPELKDSSGDEEYCNHFFARYSKDLLVEALMQILHQNTLASDTEQGLLVYLKPFRILVSLLDKPEIGPPVVGELFLEVMRAFIAYCRDALGTQMQLSYSQNGAQLISAIKENKNASEIVKTVNLLISSLSSDFLWDYMTICFEDSFRRKDHDTPAGNYLGRAPSITEVCSLLVFLLDVIPLELYSEVQTQYLPQMLSFMAHSLSDNMDVLSLPELTLALKTCFKVLSKVQMPPAFLDMETPSSDTDPLKESENNPAPEVEGEMADDDPVFHPLKSEDSGIGLSASSPELSKHLRMPRVCPDKGDVWKKGGSMQMTLHCFQELVANFASKHLFRIQLKGEGQNSPENGVMTENDMNTKKRGSWQPKQITGPQFKQMLTDFFTPRAPMLKQRSEQSPNKTTNKETEEEWDIERLLQNTGEMKEDCREALAAACHVLLDCATFPVYMSEEETEHLYSVLSQVPGSSDVSFPLWFKTLMMVCCCVKDCYIQNVAISTLLEVINHSQSLSLVLADRMKRSKTPGFGEVFGKLQMVTIPPVSPGVLKLIADKTDFYPRVAHVLWNQLNIETREHHITCVELFYRLHCLAPSANICEEIICQTLLHNDKLTRLEALFRFSVIWHLTREIQGSRVTSHNRSFDRSLFVVLDSLNCSDGAIGAAAQGWLVRALSLNDVARILEAVFLLLLHPKTQRNSIHCIKQKNSSEEFSYWCRKKRTSLKDLAAFRDSPLSSSEENLPQFNTVDRDALWAEVEKDPEKIKNELTEKRPADFRDAPYCVEQEQDYSEHTESADTSTGHNDSDNTSSFTPSSVDLSSDQNYRDNTAGQVTHKNTGQQNMDMPRQNTLLTLVRTESDVTQTSESLSSDDEADLELQAIRSSQLLKQQKEKEEMIEALFKHILLYLQPYDSKRVLYAFTVLEAILKTNPKEFIESVAATSMDTSSTAHLNLIYNLLARHQEALVGQSFYGKLQTQSPLMCPHSLLIELLTYLCLSFLRSYYPCYLKVSHKDVLGNRDVQVKSVEVLIRIMSQLVNIAKSAEGKKVEFIRFLLERCKVQEFVLLSLSASMYTSQKKYELMSAGGNRGIDLGFFEEGIINFGQDQIWSEHPLQIELLKLLQVLIVLEHHLRQLQDDQDTHGDLTKEWQRGINFQQSINAMQYVQAHSITSQGLFVSAVVKALRPDYGYGMHPQWVALVTSSLPFFGKSLGLTVAPFVVQICKNLDELVKQYENESFKISTTSKRENVSPDYPLTLLEGLTMIGHFCLLDHPTQSKKSSSSDPANLKNARNALLEELPRIINTMSLLWSIISKQEREKRPSDLLGTIKASSSVYFKSTKTLKQKILDFLNPLTSHLGVQLIAAVAAVWKKKRFNKSLSKAKILPVPSESQLIFVDLVCALKTLKTDTILHLVKEVVKKPPQIKGDEKSSLVDIPMLQFSYTFIQRLSGSELQENSQSLLALLKESVPLNLAPPGFFLLLSMLNDFVTRTPNLESKKDQKELQEVTQKILEAVGNVAGSSLEQTSWLSRNLEVKAQPQISLDDAEAEEEDLNDDSVVAQSSMVSASAPSMYSVQALSLLAEVLANLLDMVYRSDEKEKAVPLISRLLYYVFPYLRNHSAYNIPSFRAGAQLLSSLSGYAYTKRAWKKEVLDLYMDPGFFQMDTSCVHWKAIIDHFLTHEKTMFKDLMSMPSSSLKLYSSSEQKAMLLKRQGFAVLSGEVDQYHQYLPLIQERLTENIRMGQTPNMAAQMYLFFRVLLLRISPQHLTSLWPIMVTELIHTFVQLQEDLMDEVPTKSSKASKHKTATAEVNGTVYCEIQQSALELYLSACKFLDTALSIPPDKMPLFQLYRWAFVPEVDTEACSVPSEKVENYQECKPHVLRILELLRFRFGEKTTEDPKWKRTEFPLLNLHSICSVTQLTPFFRTLGYAFKAKGETTGESQGSEPTIEYPVEDFTKVLKELEENVESDFLEKLGS.

Disordered stretches follow at residues 548–572 (METP…VEGE), 697–716 (LKQR…TEEE), and 1084–1145 (QEQD…DMPR). The span at 1095–1145 (ADTSTGHNDSDNTSSFTPSSVDLSSDQNYRDNTAGQVTHKNTGQQNMDMPR) shows a compositional bias: polar residues.

It belongs to the DOP1 family.

It localises to the golgi apparatus membrane. Functionally, may be involved in protein traffic between late Golgi and early endosomes. The chain is Protein DOP1B (dop1b) from Xenopus laevis (African clawed frog).